Consider the following 517-residue polypeptide: NEDD8-activating enzyme E1 regulatory subunit (517 aa).

It belongs to the ubiquitin-activating E1 family. ULA1 subfamily. In terms of assembly, heterodimer of uba3 and ula1. The complex binds NEDD8/ubl1 and ubc12.

The protein localises to the cytoplasm. It localises to the nucleus. The protein operates within protein modification; protein neddylation. Its function is as follows. Regulatory subunit of the dimeric uba3-ula1 E1 enzyme. E1 activates NEDD8/ubl1 by first adenylating its C-terminal glycine residue with ATP, thereafter linking this residue to the side chain of the catalytic cysteine, yielding a NEDD8-UBA3 thioester and free AMP. E1 finally transfers NEDD8 to the catalytic cysteine of ubc12. The polypeptide is NEDD8-activating enzyme E1 regulatory subunit (uba5) (Schizosaccharomyces pombe (strain 972 / ATCC 24843) (Fission yeast)).